A 175-amino-acid chain; its full sequence is ATP synthase subunit b 2 (175 aa).

A helical membrane pass occupies residues 20–40 (LIFWTAVTFVIVLLILKKFAW).

It belongs to the ATPase B chain family. F-type ATPases have 2 components, F(1) - the catalytic core - and F(0) - the membrane proton channel. F(1) has five subunits: alpha(3), beta(3), gamma(1), delta(1), epsilon(1). F(0) has four main subunits: a(1), b(2) and c(10-14). The alpha and beta chains form an alternating ring which encloses part of the gamma chain. F(1) is attached to F(0) by a central stalk formed by the gamma and epsilon chains, while a peripheral stalk is formed by the delta and b chains.

It is found in the cell inner membrane. Functionally, f(1)F(0) ATP synthase produces ATP from ADP in the presence of a proton or sodium gradient. F-type ATPases consist of two structural domains, F(1) containing the extramembraneous catalytic core and F(0) containing the membrane proton channel, linked together by a central stalk and a peripheral stalk. During catalysis, ATP synthesis in the catalytic domain of F(1) is coupled via a rotary mechanism of the central stalk subunits to proton translocation. Its function is as follows. Component of the F(0) channel, it forms part of the peripheral stalk, linking F(1) to F(0). In Prosthecochloris aestuarii (strain DSM 271 / SK 413), this protein is ATP synthase subunit b 2.